The following is a 129-amino-acid chain: Photosystem II extrinsic protein V (129 aa).

Heme c is bound by residues Cys-35, Cys-38, His-39, and His-90.

This sequence belongs to the cytochrome c family. PsbV subfamily. As to quaternary structure, PSII is composed of 1 copy each of membrane proteins PsbA, PsbB, PsbC, PsbD, PsbE, PsbF, PsbH, PsbI, PsbJ, PsbK, PsbL, PsbM, PsbT, PsbX, PsbY, PsbZ, Psb30/Ycf12, peripheral proteins PsbO, CyanoQ (PsbQ), PsbU, PsbV and a large number of cofactors. It forms dimeric complexes. Homodimer in crystal structure. Requires heme c as cofactor.

It is found in the cellular thylakoid membrane. Functionally, one of the extrinsic, lumenal subunits of photosystem II (PSII). PSII is a light-driven water plastoquinone oxidoreductase, using light energy to abstract electrons from H(2)O, generating a proton gradient subsequently used for ATP formation. The extrinsic proteins stabilize the structure of photosystem II oxygen-evolving complex (OEC), the ion environment of oxygen evolution and protect the OEC against heat-induced inactivation. Low-potential cytochrome c that plays a role in the OEC of PSII. This is Photosystem II extrinsic protein V from Limnospira maxima (Arthrospira maxima).